Consider the following 326-residue polypeptide: MKGNPSTHEVIGTMSTRRFYRWLITIDGDTEINYRNYEELPSRSNYIFFFGGRLRAVKTARPFSLVVLFLILSPMVLFSVFEAHRLWHTRYGYKALVVLFYYAWAWSLLSFTKTATSDPGVLPRNIHMHKDTPQEYFNNVTLPYGAGGSAGNASVTLKYCHTCKIWRPPRASHCSVCECCVLTHDHHCIWVNNCVGQRNYRYFLAFLLSSTLACALLIANCALHLHRALHEGIRVSHRPLPVAVLLCVYAAVLCVYPVILLGYHVAMSGTQQTTREYLRSIGFRNPVMHRIRRRRDNPYAEHGFLRNMLDLMAEPRGPRSCNYRYR.

Residues 1 to 62 (MKGNPSTHEV…RLRAVKTARP (62 aa)) are Cytoplasmic-facing. Residues 63-83 (FSLVVLFLILSPMVLFSVFEA) traverse the membrane as a helical segment. At 84-90 (HRLWHTR) the chain is on the lumenal side. The chain crosses the membrane as a helical span at residues 91-111 (YGYKALVVLFYYAWAWSLLSF). At 112-202 (TKTATSDPGV…NCVGQRNYRY (91 aa)) the chain is on the cytoplasmic side. A DHHC domain is found at 158 to 208 (KYCHTCKIWRPPRASHCSVCECCVLTHDHHCIWVNNCVGQRNYRYFLAFLL). Catalysis depends on Cys-188, which acts as the S-palmitoyl cysteine intermediate. The chain crosses the membrane as a helical span at residues 203-223 (FLAFLLSSTLACALLIANCAL). At 224-241 (HLHRALHEGIRVSHRPLP) the chain is on the lumenal side. A helical transmembrane segment spans residues 242–262 (VAVLLCVYAAVLCVYPVILLG). Residues 263–326 (YHVAMSGTQQ…GPRSCNYRYR (64 aa)) are Cytoplasmic-facing.

It belongs to the DHHC palmitoyltransferase family. ERF2/ZDHHC9 subfamily. In terms of assembly, interacts with ERF4. In terms of processing, autopalmitoylated.

It localises to the endoplasmic reticulum membrane. The enzyme catalyses L-cysteinyl-[protein] + hexadecanoyl-CoA = S-hexadecanoyl-L-cysteinyl-[protein] + CoA. The ERF2-ERF4 complex is a palmitoyltransferase specific for Ras proteins. This Candida glabrata (strain ATCC 2001 / BCRC 20586 / JCM 3761 / NBRC 0622 / NRRL Y-65 / CBS 138) (Yeast) protein is Palmitoyltransferase ERF2 (ERF2).